Here is a 408-residue protein sequence, read N- to C-terminus: ORC1-type DNA replication protein 15 (408 aa).

ATP contacts are provided by residues 60–64 (VGKTA), tyrosine 208, and arginine 220.

It belongs to the CDC6/cdc18 family.

Involved in regulation of DNA replication. The protein is ORC1-type DNA replication protein 15 (cdc6o) of Haloarcula marismortui (strain ATCC 43049 / DSM 3752 / JCM 8966 / VKM B-1809) (Halobacterium marismortui).